Here is a 220-residue protein sequence, read N- to C-terminus: MKTGDKQFAVIGLGRFGLAVCKELQDSGSQVLAVDINEDRVKEAAGFVSQAIVANCTHEETVAELKLDDYDMVMIAIGADVNASILATLIAKEAGVKSVWVKANDRFQARVLQKIGADHIIMPERDMGIRVARKMLDKRVLEFHPLGSGLAMTEFVVGSRLMGKTLSDLALCKVEGVQVLGYKRGPEIIKAPDMSTTLEIGDLIIVVGPQDKLANKLKSL.

The region spanning aspartate 5–isoleucine 121 is the RCK N-terminal domain. Residues arginine 15, aspartate 35–asparagine 37, asparagine 55–cysteine 56, isoleucine 77–alanine 79, lysine 102–asparagine 104, and glutamate 124 each bind ATP. The RCK C-terminal domain maps to lysine 138–leucine 220.

The protein belongs to the KtrA potassium transport family. As to quaternary structure, the uptake system is composed of KtrA and KtrB.

Its subcellular location is the cell inner membrane. With respect to regulation, requires both ATP and a high membrane potential for activity. Binding of ATP causes a conformational change in KtrA, which promotes formation of the KtrAB complex. Can also bind, with lower affinity, other nucleotides such as NADH or NAD(+), but only ATP can induce a conformational change. Part of the Na(+)-dependent high affinity K(+) uptake system KtrAB. KtrA is the regulatory subunit and plays an important role in the substrate specificity and transport mechanism of the system. Binds ATP but lacks ATPase activity. This is Ktr system potassium uptake protein A (ktrA) from Vibrio alginolyticus.